Consider the following 153-residue polypeptide: D-erythrulose-4-phosphate isomerase 1 (153 aa).

Cys-69 serves as the catalytic Proton acceptor.

The protein belongs to the LacAB/RpiB family.

The catalysed reaction is D-erythrulose 4-phosphate = D-erythrose 4-phosphate. It functions in the pathway carbohydrate metabolism; erythritol degradation. Its pathway is carbohydrate metabolism; D-threitol degradation. Functionally, catalyzes the isomerization of D-erythrulose-4P to D-erythrose-4P. Involved in the degradation pathways of erythritol and D-threitol, that allow M.smegmatis to grow on these compounds as the sole carbon source. This chain is D-erythrulose-4-phosphate isomerase 1, found in Mycolicibacterium smegmatis (strain ATCC 700084 / mc(2)155) (Mycobacterium smegmatis).